We begin with the raw amino-acid sequence, 124 residues long: Aspartate 1-decarboxylase (124 aa).

Ser21 serves as the catalytic Schiff-base intermediate with substrate; via pyruvic acid. A Pyruvic acid (Ser) modification is found at Ser21. A substrate-binding site is contributed by Thr53. Catalysis depends on Tyr54, which acts as the Proton donor. Substrate is bound at residue 69–71 (GAA).

The protein belongs to the PanD family. In terms of assembly, heterooctamer of four alpha and four beta subunits. Pyruvate serves as cofactor. In terms of processing, is synthesized initially as an inactive proenzyme, which is activated by self-cleavage at a specific serine bond to produce a beta-subunit with a hydroxyl group at its C-terminus and an alpha-subunit with a pyruvoyl group at its N-terminus.

The protein resides in the cytoplasm. The enzyme catalyses L-aspartate + H(+) = beta-alanine + CO2. The protein operates within cofactor biosynthesis; (R)-pantothenate biosynthesis; beta-alanine from L-aspartate: step 1/1. Catalyzes the pyruvoyl-dependent decarboxylation of aspartate to produce beta-alanine. This is Aspartate 1-decarboxylase from Dehalococcoides mccartyi (strain CBDB1).